We begin with the raw amino-acid sequence, 370 residues long: tRNA-specific 2-thiouridylase MnmA (370 aa).

ATP-binding positions include 24–31 (AMSGGVDS) and leucine 50. The active-site Nucleophile is cysteine 119. Cysteine 119 and cysteine 215 are oxidised to a cystine. ATP is bound at residue glycine 143. The interval 165-167 (KDQ) is interaction with tRNA. Cysteine 215 serves as the catalytic Cysteine persulfide intermediate.

Belongs to the MnmA/TRMU family.

The protein localises to the cytoplasm. It carries out the reaction S-sulfanyl-L-cysteinyl-[protein] + uridine(34) in tRNA + AH2 + ATP = 2-thiouridine(34) in tRNA + L-cysteinyl-[protein] + A + AMP + diphosphate + H(+). Catalyzes the 2-thiolation of uridine at the wobble position (U34) of tRNA, leading to the formation of s(2)U34. The sequence is that of tRNA-specific 2-thiouridylase MnmA from Wolbachia pipientis wMel.